Reading from the N-terminus, the 216-residue chain is Phosphoribosylformylglycinamidine synthase subunit PurQ (216 aa).

Residues 2–216 (SIGVIVFPGS…GRRMLEALLG (215 aa)) form the Glutamine amidotransferase type-1 domain. C86 acts as the Nucleophile in catalysis. Active-site residues include H193 and E195.

As to quaternary structure, part of the FGAM synthase complex composed of 1 PurL, 1 PurQ and 2 PurS subunits.

It localises to the cytoplasm. It catalyses the reaction N(2)-formyl-N(1)-(5-phospho-beta-D-ribosyl)glycinamide + L-glutamine + ATP + H2O = 2-formamido-N(1)-(5-O-phospho-beta-D-ribosyl)acetamidine + L-glutamate + ADP + phosphate + H(+). The enzyme catalyses L-glutamine + H2O = L-glutamate + NH4(+). The protein operates within purine metabolism; IMP biosynthesis via de novo pathway; 5-amino-1-(5-phospho-D-ribosyl)imidazole from N(2)-formyl-N(1)-(5-phospho-D-ribosyl)glycinamide: step 1/2. In terms of biological role, part of the phosphoribosylformylglycinamidine synthase complex involved in the purines biosynthetic pathway. Catalyzes the ATP-dependent conversion of formylglycinamide ribonucleotide (FGAR) and glutamine to yield formylglycinamidine ribonucleotide (FGAM) and glutamate. The FGAM synthase complex is composed of three subunits. PurQ produces an ammonia molecule by converting glutamine to glutamate. PurL transfers the ammonia molecule to FGAR to form FGAM in an ATP-dependent manner. PurS interacts with PurQ and PurL and is thought to assist in the transfer of the ammonia molecule from PurQ to PurL. The chain is Phosphoribosylformylglycinamidine synthase subunit PurQ from Synechococcus sp. (strain CC9605).